A 402-amino-acid polypeptide reads, in one-letter code: Acyl-[acyl-carrier-protein] desaturase 3, chloroplastic (402 aa).

Residues 1–32 constitute a chloroplast transit peptide; sequence MSLTGCLPPRPPCSMRRRTSGGGASVSPVVAM. A disordered region spans residues 1 to 66; that stretch reads MSLTGCLPPR…EVPPQVTHTL (66 aa). Positions 139, 178, 181, 231, 264, and 267 each coordinate Fe cation.

It belongs to the fatty acid desaturase type 2 family. As to quaternary structure, homodimer. Fe(2+) is required as a cofactor.

The protein localises to the plastid. It localises to the chloroplast. The protein operates within lipid metabolism; fatty acid metabolism. Its function is as follows. Introduces a cis double bond in the acyl chain of an acyl-[acyl-carrier protein]. This is Acyl-[acyl-carrier-protein] desaturase 3, chloroplastic from Oryza sativa subsp. japonica (Rice).